The primary structure comprises 384 residues: H-2 class I histocompatibility antigen, TLA(B) alpha chain (384 aa).

A signal peptide spans M1–P26. The alpha-1 stretch occupies residues G27 to N116. Topologically, residues G27–R314 are extracellular. N-linked (GlcNAc...) asparagine glycosylation is found at N63, N112, and N116. Positions G117–T208 are alpha-2. 2 cysteine pairs are disulfide-bonded: C127–C190 and C229–C285. The alpha-3 stretch occupies residues D209–W300. The 89-residue stretch at P211–R299 folds into the Ig-like C1-type domain. The connecting peptide stretch occupies residues E301–R314. An N-linked (GlcNAc...) asparagine glycan is attached at N309. A helical membrane pass occupies residues A315 to M334. Residues R335 to S384 lie on the Cytoplasmic side of the membrane. The span at E354–S364 shows a compositional bias: basic and acidic residues. A disordered region spans residues E354 to S384.

The protein belongs to the MHC class I family. Heterodimer of an alpha chain and a beta chain (beta-2-microglobulin). As to expression, TL antigens are only expressed on thymocytes, activated T-lymphocytes and on some thymic leukemias.

It is found in the membrane. Its function is as follows. Involved in the presentation of foreign antigens to the immune system. In Mus musculus (Mouse), this protein is H-2 class I histocompatibility antigen, TLA(B) alpha chain (H2-T3).